The following is a 103-amino-acid chain: MQNQKIRIRLKAFDYRLIDQSAAEIVDTAKRTGAVVKGPVPLPTRIERFDILRSPHVNKTSRDQLEIRTHLRLMDIVDPTEKTVDALMKLDLPAGVGVEIKLQ.

Belongs to the universal ribosomal protein uS10 family. In terms of assembly, part of the 30S ribosomal subunit.

Involved in the binding of tRNA to the ribosomes. This chain is Small ribosomal subunit protein uS10, found in Polynucleobacter necessarius subsp. necessarius (strain STIR1).